Reading from the N-terminus, the 274-residue chain is Large ribosomal subunit protein uL2 (274 aa).

The disordered stretch occupies residues 224 to 274 (AMNPVDHPHGGGEGRTGEGQVPVSPWNTMTKGYRTRSNKRTQTFIVSRRKK). Positions 229-239 (DHPHGGGEGRT) are enriched in basic and acidic residues.

This sequence belongs to the universal ribosomal protein uL2 family. As to quaternary structure, part of the 50S ribosomal subunit. Forms a bridge to the 30S subunit in the 70S ribosome.

One of the primary rRNA binding proteins. Required for association of the 30S and 50S subunits to form the 70S ribosome, for tRNA binding and peptide bond formation. It has been suggested to have peptidyltransferase activity; this is somewhat controversial. Makes several contacts with the 16S rRNA in the 70S ribosome. The protein is Large ribosomal subunit protein uL2 of Methylibium petroleiphilum (strain ATCC BAA-1232 / LMG 22953 / PM1).